The sequence spans 445 residues: N-succinylarginine dihydrolase (445 aa).

Residues 19–28, Asn110, and 137–138 contribute to the substrate site; these read AGLSFGNVAS and HR. The active site involves Glu174. Arg214 contacts substrate. His250 is a catalytic residue. Residues Asp252 and Asn363 each coordinate substrate. The Nucleophile role is filled by Cys369.

This sequence belongs to the succinylarginine dihydrolase family. As to quaternary structure, homodimer.

The catalysed reaction is N(2)-succinyl-L-arginine + 2 H2O + 2 H(+) = N(2)-succinyl-L-ornithine + 2 NH4(+) + CO2. Its pathway is amino-acid degradation; L-arginine degradation via AST pathway; L-glutamate and succinate from L-arginine: step 2/5. Functionally, catalyzes the hydrolysis of N(2)-succinylarginine into N(2)-succinylornithine, ammonia and CO(2). The protein is N-succinylarginine dihydrolase of Shewanella pealeana (strain ATCC 700345 / ANG-SQ1).